Reading from the N-terminus, the 640-residue chain is Protein cereblon (640 aa).

The segment covering 1 to 11 has biased composition (acidic residues); the sequence is MDDEETAEIDE. 2 disordered regions span residues 1 to 25 and 92 to 159; these read MDDE…ELGP and REDP…EAVP. Residues 113-137 are compositionally biased toward low complexity; that stretch reads QPAQQEEQASLPYDSPSRASISSRH. The 229-residue stretch at 278–506 folds into the Lon N-terminal domain; that stretch reads RMLIFMHQHI…IIDTTLKQES (229 aa). Residues 505–614 enclose the CULT domain; the sequence is ESLFYCRYCN…LAGSSVRIGK (110 aa). Positions 510, 513, 579, and 582 each coordinate Zn(2+).

The protein belongs to the CRBN family. Likely a component of a DCX (DDB1-CUL4-X-box) protein ligase complex. May interact with pic/DDB1. Ubiquitinated.

The protein localises to the nucleus. It participates in protein modification; protein ubiquitination. Substrate recognition component of a DCX (DDB1-CUL4-X-box) E3 protein ligase complex that mediates the ubiquitination and subsequent proteasomal degradation of target proteins. Has an essential role in mediating growth by negatively regulating insulin signaling. It also has a role in maintaining presynaptic function in the neuromuscular junction synapses of third-instar larvae. The protein is Protein cereblon of Drosophila virilis (Fruit fly).